The following is a 197-amino-acid chain: Adenylyl-sulfate kinase (197 aa).

G33–S40 contributes to the ATP binding site. The Phosphoserine intermediate role is filled by S107.

The protein belongs to the APS kinase family.

It catalyses the reaction adenosine 5'-phosphosulfate + ATP = 3'-phosphoadenylyl sulfate + ADP + H(+). It functions in the pathway sulfur metabolism; hydrogen sulfide biosynthesis; sulfite from sulfate: step 2/3. Its function is as follows. Catalyzes the synthesis of activated sulfate. In Bacillus pumilus (strain SAFR-032), this protein is Adenylyl-sulfate kinase.